The following is a 353-amino-acid chain: Fe(3+) ions import ATP-binding protein FbpC (353 aa).

The 231-residue stretch at 9-239 (VTFENVTKKF…PASAFIADFM (231 aa)) folds into the ABC transporter domain. Residue 41–48 (GPSGCGKT) participates in ATP binding.

It belongs to the ABC transporter superfamily. Fe(3+) ion importer (TC 3.A.1.10) family. In terms of assembly, the complex is composed of two ATP-binding proteins (FbpC), two transmembrane proteins (FbpB) and a solute-binding protein (FbpA).

It localises to the cell inner membrane. The catalysed reaction is Fe(3+)(out) + ATP + H2O = Fe(3+)(in) + ADP + phosphate + H(+). Its function is as follows. Part of the ABC transporter complex FbpABC involved in Fe(3+) ions import. Responsible for energy coupling to the transport system. This chain is Fe(3+) ions import ATP-binding protein FbpC, found in Brucella abortus (strain 2308).